The sequence spans 201 residues: Two-component response regulator ORR9 (201 aa).

Residues H10–L142 form the Response regulatory domain. Residue D75 is modified to 4-aspartylphosphate. The tract at residues H149 to S201 is disordered. The segment covering S158–N180 has biased composition (low complexity).

This sequence belongs to the ARR family. Type-A subfamily. In terms of processing, two-component system major event consists of a His-to-Asp phosphorelay between a sensor histidine kinase (HK) and a response regulator (RR). In plants, the His-to-Asp phosphorelay involves an additional intermediate named Histidine-containing phosphotransfer protein (HPt). This multistep phosphorelay consists of a His-Asp-His-Asp sequential transfer of a phosphate group between first a His and an Asp of the HK protein, followed by the transfer to a conserved His of the HPt protein and finally the transfer to an Asp in the receiver domain of the RR protein.

In terms of biological role, functions as a response regulator involved in His-to-Asp phosphorelay signal transduction system. Phosphorylation of the Asp residue in the receiver domain activates the ability of the protein to promote the transcription of target genes. Type-A response regulators seem to act as negative regulators of the cytokinin signaling. In Oryza sativa subsp. japonica (Rice), this protein is Two-component response regulator ORR9.